The sequence spans 287 residues: 4-diphosphocytidyl-2-C-methyl-D-erythritol kinase (287 aa).

Residue Lys10 is part of the active site. 92–102 (PLAAGLAGGSA) contacts ATP. The active site involves Asp134.

It belongs to the GHMP kinase family. IspE subfamily.

It carries out the reaction 4-CDP-2-C-methyl-D-erythritol + ATP = 4-CDP-2-C-methyl-D-erythritol 2-phosphate + ADP + H(+). It functions in the pathway isoprenoid biosynthesis; isopentenyl diphosphate biosynthesis via DXP pathway; isopentenyl diphosphate from 1-deoxy-D-xylulose 5-phosphate: step 3/6. Its function is as follows. Catalyzes the phosphorylation of the position 2 hydroxy group of 4-diphosphocytidyl-2C-methyl-D-erythritol. The sequence is that of 4-diphosphocytidyl-2-C-methyl-D-erythritol kinase from Caldanaerobacter subterraneus subsp. tengcongensis (strain DSM 15242 / JCM 11007 / NBRC 100824 / MB4) (Thermoanaerobacter tengcongensis).